We begin with the raw amino-acid sequence, 613 residues long: DNA mismatch repair protein MutL (613 aa).

This sequence belongs to the DNA mismatch repair MutL/HexB family.

Its function is as follows. This protein is involved in the repair of mismatches in DNA. It is required for dam-dependent methyl-directed DNA mismatch repair. May act as a 'molecular matchmaker', a protein that promotes the formation of a stable complex between two or more DNA-binding proteins in an ATP-dependent manner without itself being part of a final effector complex. The sequence is that of DNA mismatch repair protein MutL from Bradyrhizobium sp. (strain ORS 278).